A 397-amino-acid polypeptide reads, in one-letter code: Tryptophan synthase beta chain (397 aa).

Lys86 carries the post-translational modification N6-(pyridoxal phosphate)lysine.

It belongs to the TrpB family. As to quaternary structure, tetramer of two alpha and two beta chains. It depends on pyridoxal 5'-phosphate as a cofactor.

It carries out the reaction (1S,2R)-1-C-(indol-3-yl)glycerol 3-phosphate + L-serine = D-glyceraldehyde 3-phosphate + L-tryptophan + H2O. The protein operates within amino-acid biosynthesis; L-tryptophan biosynthesis; L-tryptophan from chorismate: step 5/5. Its function is as follows. The beta subunit is responsible for the synthesis of L-tryptophan from indole and L-serine. This is Tryptophan synthase beta chain (trpB) from Buchnera aphidicola subsp. Diuraphis noxia.